Here is a 177-residue protein sequence, read N- to C-terminus: NADH-quinone oxidoreductase subunit E (177 aa).

[2Fe-2S] cluster-binding residues include Cys93, Cys98, Cys134, and Cys138.

It belongs to the complex I 24 kDa subunit family. Requires [2Fe-2S] cluster as cofactor.

The catalysed reaction is a quinone + NADH + 5 H(+)(in) = a quinol + NAD(+) + 4 H(+)(out). Its function is as follows. NDH-1 shuttles electrons from NADH, via FMN and iron-sulfur (Fe-S) centers, to quinones in the respiratory chain. Couples the redox reaction to proton translocation (for every two electrons transferred, four hydrogen ions are translocated across the cytoplasmic membrane), and thus conserves the redox energy in a proton gradient. This chain is NADH-quinone oxidoreductase subunit E (nuoE), found in Rickettsia prowazekii (strain Madrid E).